The primary structure comprises 44 residues: Antibacterial protein 2 homolog (44 aa).

Belongs to the staphylococcal hemolytic protein family.

Its subcellular location is the secreted. In terms of biological role, has hemolytic activity and also inhibits the growth of gonococci. In Staphylococcus haemolyticus (strain JCSC1435), this protein is Antibacterial protein 2 homolog.